The primary structure comprises 150 residues: MVHATSPLLLLLLLSLALVAPGLSARKCSLTGKWDNDLGSIMTIGAVNDNGEFNGTYITAVADNPGNITRSPLLGIQHKRACQPTFGFTVHWNFSESTSVFVGQCFVDKSGKEVLKTKWLQRLAVDDISDDWKATRVGNNDFTRQRTVEE.

The signal sequence occupies residues 1-24 (MVHATSPLLLLLLLSLALVAPGLS). In terms of domain architecture, Avidin-like spans 26-147 (RKCSLTGKWD…GNNDFTRQRT (122 aa)). The cysteines at positions 28 and 105 are disulfide-linked. Asn36 and Ser40 together coordinate biotin. Residue Asn54 is glycosylated (N-linked (GlcNAc...) asparagine). 3 residues coordinate biotin: Tyr57, Thr59, and Asp63. N-linked (GlcNAc...) asparagine glycosylation is found at Asn67 and Asn93. Biotin-binding residues include Ser95, Ser99, and Asn140.

Belongs to the avidin/streptavidin family. Homotetramer. Glycosylated.

Its subcellular location is the secreted. Its function is as follows. Forms a strong non-covalent specific complex with biotin. The polypeptide is Avidin-related protein 1 (AVR1) (Gallus gallus (Chicken)).